The chain runs to 221 residues: uncharacterized protein (221 aa).

Residues 40 to 162 form a disordered region; that stretch reads TIEVEPSPVQ…EPPEKVELSP (123 aa). Over residues 47–60 the composition is skewed to polar residues; the sequence is PVQQDNPPISSEQA. A compositionally biased stretch (low complexity) spans 82 to 92; sequence SSAQQEATAQT.

This is an uncharacterized protein from Homo sapiens (Human).